The following is a 209-amino-acid chain: FK506-binding protein 2B (209 aa).

An N-terminal signal peptide occupies residues 1–19 (MRFSLLALLGTIVATSVSA). The 90-residue stretch at 47-136 (GDELSMHYTG…VFEVELLEIK (90 aa)) folds into the PPIase FKBP-type domain. The chain crosses the membrane as a helical span at residues 157–177 (FTSPSFLVSTGIIVALFLIVF). Residues 178–207 (KMAKKQDIAEANEKAAAATAEASTEKKEEK) are a coiled coil. The disordered stretch occupies residues 190-209 (EKAAAATAEASTEKKEEKKE). Residues 200 to 209 (STEKKEEKKE) show a composition bias toward basic and acidic residues.

Belongs to the FKBP-type PPIase family. FKBP2 subfamily.

It is found in the membrane. It carries out the reaction [protein]-peptidylproline (omega=180) = [protein]-peptidylproline (omega=0). Its activity is regulated as follows. Inhibited by both FK506 and rapamycin. Functionally, PPIases accelerate the folding of proteins. It catalyzes the cis-trans isomerization of proline imidic peptide bonds in oligopeptides. The protein is FK506-binding protein 2B (FKBP3) of Rhizopus delemar (strain RA 99-880 / ATCC MYA-4621 / FGSC 9543 / NRRL 43880) (Mucormycosis agent).